We begin with the raw amino-acid sequence, 318 residues long: Ribonuclease Z (318 aa).

Zn(2+) contacts are provided by His-62, His-64, Asp-66, His-67, His-140, Asp-211, and His-269. Residue Asp-66 is the Proton acceptor of the active site.

Belongs to the RNase Z family. As to quaternary structure, homodimer. Zn(2+) serves as cofactor.

The catalysed reaction is Endonucleolytic cleavage of RNA, removing extra 3' nucleotides from tRNA precursor, generating 3' termini of tRNAs. A 3'-hydroxy group is left at the tRNA terminus and a 5'-phosphoryl group is left at the trailer molecule.. Zinc phosphodiesterase, which displays some tRNA 3'-processing endonuclease activity. Probably involved in tRNA maturation, by removing a 3'-trailer from precursor tRNA. The polypeptide is Ribonuclease Z (Brevibacillus brevis (strain 47 / JCM 6285 / NBRC 100599)).